Here is a 444-residue protein sequence, read N- to C-terminus: tRNA (guanine-N(7)-)-methyltransferase non-catalytic subunit TRM82 (444 aa).

WD repeat units follow at residues 1-47 (MSVI…WSDD), 48-99 (FDKI…LGAP), 100-147 (PIYS…KRFC), 148-192 (FSKR…EPIL), 193-237 (GHVS…DKWL), 238-279 (FGHK…STFD), and 308-354 (FAVS…ITFP). The tract at residues 55–92 (RNTTAKEQQGQSSENENENKKLKSNKGDSIKRTAAKVP) is disordered. Over residues 71–85 (NENKKLKSNKGDSIK) the composition is skewed to basic and acidic residues. Ser93 carries the phosphoserine modification.

Belongs to the WD repeat TRM82 family. As to quaternary structure, forms a heterodimer with the catalytic subunit TRM8.

The protein resides in the nucleus. The protein operates within tRNA modification; N(7)-methylguanine-tRNA biosynthesis. Its function is as follows. Required for the formation of N(7)-methylguanine at position 46 (m7G46) in tRNA, a modification required to maintain stability of tRNAs; its absence resulting in tRNA decay. In the complex, it is required to stabilize and induce conformational changes of the catalytic subunit. In Saccharomyces cerevisiae (strain RM11-1a) (Baker's yeast), this protein is tRNA (guanine-N(7)-)-methyltransferase non-catalytic subunit TRM82.